The following is a 206-amino-acid chain: Small ribosomal subunit protein uS4 (206 aa).

The S4 RNA-binding domain occupies 94-157 (RRLDNVVYRL…RRRTYFKNLI (64 aa)).

This sequence belongs to the universal ribosomal protein uS4 family. Part of the 30S ribosomal subunit. Contacts protein S5. The interaction surface between S4 and S5 is involved in control of translational fidelity.

In terms of biological role, one of the primary rRNA binding proteins, it binds directly to 16S rRNA where it nucleates assembly of the body of the 30S subunit. Its function is as follows. With S5 and S12 plays an important role in translational accuracy. The sequence is that of Small ribosomal subunit protein uS4 from Roseiflexus sp. (strain RS-1).